Reading from the N-terminus, the 178-residue chain is Ribosome maturation factor RimM (178 aa).

The 78-residue stretch at 101–178 (ADEYYWYQLV…VMRVEWDADF (78 aa)) folds into the PRC barrel domain.

The protein belongs to the RimM family. Binds ribosomal protein uS19.

It is found in the cytoplasm. In terms of biological role, an accessory protein needed during the final step in the assembly of 30S ribosomal subunit, possibly for assembly of the head region. Essential for efficient processing of 16S rRNA. May be needed both before and after RbfA during the maturation of 16S rRNA. It has affinity for free ribosomal 30S subunits but not for 70S ribosomes. In Pseudomonas putida (strain GB-1), this protein is Ribosome maturation factor RimM.